The following is a 208-amino-acid chain: Cytochrome c oxidase assembly protein CtaG (208 aa).

The Cytoplasmic portion of the chain corresponds to 1-19 (MPDTQPNVSPNPIRRRGLG). A helical; Signal-anchor for type II membrane protein transmembrane segment spans residues 20 to 42 (RDATVASICGLVVALMVGASFAA). Topologically, residues 43–208 (VPFYNWFCRT…TAPDKRKGNL (166 aa)) are periplasmic.

It belongs to the COX11/CtaG family.

It localises to the cell inner membrane. Exerts its effect at some terminal stage of cytochrome c oxidase synthesis, probably by being involved in the insertion of the copper B into subunit I. The sequence is that of Cytochrome c oxidase assembly protein CtaG from Rhodopseudomonas palustris (strain HaA2).